A 938-amino-acid polypeptide reads, in one-letter code: LPS-assembly protein LptD (938 aa).

A signal peptide spans 1–33 (MAVKHPAFRKKFPLLVTGSLLALQPAFSLQSFA). The interval 52-96 (KTATSALPPRPQHSRSAVSTTSGSATATATKQEPAPVLVTESKGR) is disordered. Residues 65–81 (SRSAVSTTSGSATATAT) are compositionally biased toward low complexity.

Belongs to the LptD family. In terms of assembly, component of the lipopolysaccharide transport and assembly complex. Interacts with LptE and LptA.

It localises to the cell outer membrane. Together with LptE, is involved in the assembly of lipopolysaccharide (LPS) at the surface of the outer membrane. The polypeptide is LPS-assembly protein LptD (Ectopseudomonas mendocina (strain ymp) (Pseudomonas mendocina)).